Reading from the N-terminus, the 117-residue chain is Large ribosomal subunit protein bL20c (117 aa).

It belongs to the bacterial ribosomal protein bL20 family.

Its subcellular location is the plastid. It localises to the chloroplast. In terms of biological role, binds directly to 23S ribosomal RNA and is necessary for the in vitro assembly process of the 50S ribosomal subunit. It is not involved in the protein synthesizing functions of that subunit. The polypeptide is Large ribosomal subunit protein bL20c (Calycanthus floridus var. glaucus (Eastern sweetshrub)).